The primary structure comprises 125 residues: Small ribosomal subunit protein uS12 (125 aa).

Positions 1–28 are disordered; the sequence is MPTINQLVRKGREKVKKKSKAPALEGNP. A compositionally biased stretch (basic residues) spans 9-20; sequence RKGREKVKKKSK. D89 bears the 3-methylthioaspartic acid mark. A disordered region spans residues 104 to 125; it reads AAGVKDRKQSRSKYGTKRPKEK. Residues 113–125 are compositionally biased toward basic residues; it reads SRSKYGTKRPKEK.

This sequence belongs to the universal ribosomal protein uS12 family. Part of the 30S ribosomal subunit. Contacts proteins S8 and S17. May interact with IF1 in the 30S initiation complex.

With S4 and S5 plays an important role in translational accuracy. Its function is as follows. Interacts with and stabilizes bases of the 16S rRNA that are involved in tRNA selection in the A site and with the mRNA backbone. Located at the interface of the 30S and 50S subunits, it traverses the body of the 30S subunit contacting proteins on the other side and probably holding the rRNA structure together. The combined cluster of proteins S8, S12 and S17 appears to hold together the shoulder and platform of the 30S subunit. The chain is Small ribosomal subunit protein uS12 from Persephonella marina (strain DSM 14350 / EX-H1).